A 219-amino-acid polypeptide reads, in one-letter code: Thiopurine S-methyltransferase (219 aa).

S-adenosyl-L-methionine-binding residues include Trp-10, Leu-45, Glu-66, and Arg-123.

The protein belongs to the class I-like SAM-binding methyltransferase superfamily. TPMT family.

The protein resides in the cytoplasm. It catalyses the reaction S-adenosyl-L-methionine + a thiopurine = S-adenosyl-L-homocysteine + a thiopurine S-methylether.. The polypeptide is Thiopurine S-methyltransferase (Bordetella petrii (strain ATCC BAA-461 / DSM 12804 / CCUG 43448)).